Here is a 90-residue protein sequence, read N- to C-terminus: Albumin (90 aa).

Serine 5 bears the Phosphoserine mark. Glutamate 6 and aspartate 13 together coordinate Ca(2+). The Albumin domain maps to 25–90 (LLRHLVDEPQ…LVASTQAALA (66 aa)). Position 61 is a phosphoserine (serine 61). Residues threonine 62 and threonine 64 each carry the phosphothreonine modification. Lysine 80 is subject to N6-methyllysine.

Belongs to the ALB/AFP/VDB family. As to quaternary structure, interacts with FCGRT; this interaction regulates ALB homeostasis. Interacts with TASOR. In plasma, occurs in a covalently-linked complex with chromophore-bound alpha-1-microglobulin; this interaction does not prevent fatty acid binding to ALB. Plasma.

Its subcellular location is the secreted. Its function is as follows. Binds water, Ca(2+), Na(+), K(+), fatty acids, hormones, bilirubin and drugs. Its main function is the regulation of the colloidal osmotic pressure of blood. Major zinc transporter in plasma, typically binds about 80% of all plasma zinc. Major calcium and magnesium transporter in plasma, binds approximately 45% of circulating calcium and magnesium in plasma. Potentially has more than two calcium-binding sites and might additionally bind calcium in a non-specific manner. The shared binding site between zinc and calcium suggests a crosstalk between zinc and calcium transport in the blood. The rank order of affinity is zinc &gt; calcium &gt; magnesium. Binds to the bacterial siderophore enterobactin and inhibits enterobactin-mediated iron uptake of E.coli from ferric transferrin, and may thereby limit the utilization of iron and growth of enteric bacteria such as E.coli. Does not prevent iron uptake by the bacterial siderophore aerobactin. In Capra hircus (Goat), this protein is Albumin.